We begin with the raw amino-acid sequence, 507 residues long: Nuclear distribution protein PAC1 (507 aa).

Residues 72–98 (STVLRLQRKIMDLTDEVSNLKTIIEAK) adopt a coiled-coil conformation. WD repeat units lie at residues 125-164 (QTHQ…PSIP), 170-222 (AHSR…QIRI), 225-265 (GHDH…CTRT), 268-312 (GHSD…GLCL), 315-389 (GHSH…VRPN), 410-449 (GHQS…TGGR), and 474-507 (PKDT…RLWS).

This sequence belongs to the WD repeat LIS1/nudF family. Self-associates. Interacts with NDL1 and dynein.

It localises to the cytoplasm. The protein localises to the cytoskeleton. The protein resides in the spindle pole. Its function is as follows. Positively regulates the activity of the minus-end directed microtubule motor protein dynein. Plays a central role in positioning the mitotic spindle at the bud neck during cell division. Targets cytoplasmic dynein to microtubule plus ends, thereby promoting dynein-mediated microtubule sliding along the bud cortex and consequently the movement of the mitotic spindle to the bud neck. In Meyerozyma guilliermondii (strain ATCC 6260 / CBS 566 / DSM 6381 / JCM 1539 / NBRC 10279 / NRRL Y-324) (Yeast), this protein is Nuclear distribution protein PAC1.